A 237-amino-acid polypeptide reads, in one-letter code: Ribonuclease PH (237 aa).

Phosphate-binding positions include Arg86 and 124-126 (GTR).

The protein belongs to the RNase PH family. As to quaternary structure, homohexameric ring arranged as a trimer of dimers.

It catalyses the reaction tRNA(n+1) + phosphate = tRNA(n) + a ribonucleoside 5'-diphosphate. In terms of biological role, phosphorolytic 3'-5' exoribonuclease that plays an important role in tRNA 3'-end maturation. Removes nucleotide residues following the 3'-CCA terminus of tRNAs; can also add nucleotides to the ends of RNA molecules by using nucleoside diphosphates as substrates, but this may not be physiologically important. Probably plays a role in initiation of 16S rRNA degradation (leading to ribosome degradation) during starvation. The sequence is that of Ribonuclease PH from Idiomarina loihiensis (strain ATCC BAA-735 / DSM 15497 / L2-TR).